The sequence spans 201 residues: Putative pseudouridine methyltransferase (201 aa).

The S-adenosyl-L-methionine site is built by M132 and C186.

The protein belongs to the methyltransferase superfamily. TrmY family.

The protein localises to the cytoplasm. This chain is Putative pseudouridine methyltransferase, found in Vibrio cholerae serotype O1 (strain ATCC 39315 / El Tor Inaba N16961).